The following is a 323-amino-acid chain: Aspartate carbamoyltransferase catalytic subunit (323 aa).

The carbamoyl phosphate site is built by Arg-71 and Thr-72. Lys-99 is an L-aspartate binding site. Positions 121, 151, and 154 each coordinate carbamoyl phosphate. Residues Arg-184 and Arg-239 each coordinate L-aspartate. Residues Gly-280 and Pro-281 each contribute to the carbamoyl phosphate site.

Belongs to the aspartate/ornithine carbamoyltransferase superfamily. ATCase family. As to quaternary structure, heterododecamer (2C3:3R2) of six catalytic PyrB chains organized as two trimers (C3), and six regulatory PyrI chains organized as three dimers (R2).

The catalysed reaction is carbamoyl phosphate + L-aspartate = N-carbamoyl-L-aspartate + phosphate + H(+). It participates in pyrimidine metabolism; UMP biosynthesis via de novo pathway; (S)-dihydroorotate from bicarbonate: step 2/3. Its function is as follows. Catalyzes the condensation of carbamoyl phosphate and aspartate to form carbamoyl aspartate and inorganic phosphate, the committed step in the de novo pyrimidine nucleotide biosynthesis pathway. The chain is Aspartate carbamoyltransferase catalytic subunit from Cupriavidus pinatubonensis (strain JMP 134 / LMG 1197) (Cupriavidus necator (strain JMP 134)).